We begin with the raw amino-acid sequence, 704 residues long: Structure-specific endonuclease subunit SLX1 homolog (704 aa).

The region spanning 4 to 90 (RFHCVYLLTS…TASARLRHTI (87 aa)) is the GIY-YIG domain. Disordered stretches follow at residues 157–180 (ESPR…ADGV), 290–323 (ASFA…RVRT), and 354–378 (GAAL…SRPP). Polar residues-rich tracts occupy residues 161–175 (VGTQ…SLQG) and 311–320 (AGSSTPSPQR). An SLX1-type zinc finger spans residues 446–526 (CSLCALPLQP…PSQPCPCPLC (81 aa)). 2 disordered regions span residues 601-629 (VPGA…SSPI) and 650-671 (ASLA…GHSN). The segment covering 650–662 (ASLAALSPTSASP) has biased composition (low complexity).

It belongs to the SLX1 family. In terms of assembly, forms a heterodimer with a member of the SLX4 family. A divalent metal cation is required as a cofactor.

It localises to the nucleus. In terms of biological role, catalytic subunit of a heterodimeric structure-specific endonuclease that resolves DNA secondary structures generated during DNA repair and recombination. Has endonuclease activity towards branched DNA substrates, introducing single-strand cuts in duplex DNA close to junctions with ss-DNA. In Leishmania major, this protein is Structure-specific endonuclease subunit SLX1 homolog.